The chain runs to 294 residues: Fatty acyl-CoA reductase Rv0547c (294 aa).

Positions 49, 50, 52, 72, 97, 98, 124, 192, 196, 225, and 227 each coordinate NADP(+). Tyr-192 (proton acceptor) is an active-site residue.

It belongs to the short-chain dehydrogenases/reductases (SDR) family.

Its subcellular location is the host mitochondrion. It catalyses the reaction hexadecanal + NADP(+) + CoA = hexadecanoyl-CoA + NADPH + H(+). Its function is as follows. Oxidoreductase that promotes the persistence of M.tuberculosis in host macrophages by reprogramming the fatty acid metabolism in host mitochondria. When localized in the host mitochondria, it potentially acts on unknown lipid substrates and converts them into products that directly or indirectly alter the lipid profile of the mitochondria. This change in lipid profile results in increased mitochondrial membrane fluidity, enhanced endogenous fatty acid oxidation and increased mitochondrial spare respiratory capacity. All these events eventually favor M.tuberculosis persistence in the host macrophages. In vitro, can catalyze the NADPH-dependent reduction of palmitoyl-CoA (hexadecanoyl-CoA). The chain is Fatty acyl-CoA reductase Rv0547c from Mycobacterium tuberculosis (strain ATCC 25618 / H37Rv).